The sequence spans 607 residues: Pyruvate decarboxylase 1 (607 aa).

Residues Asp69 and His156 each contribute to the substrate site. Residues 434 to 516 (DSWFNCQKLK…FLINNGGYTI (83 aa)) are thiamine pyrophosphate binding. Mg(2+) contacts are provided by Asp484, Asn511, and Gly513. Position 517 (Glu517) interacts with substrate.

This sequence belongs to the TPP enzyme family. As to quaternary structure, homotetramer. A metal cation serves as cofactor. The cofactor is thiamine diphosphate. Highly expressed in seeds, and at lower levels in roots and siliques.

It carries out the reaction a 2-oxocarboxylate + H(+) = an aldehyde + CO2. Functionally, may play a role in ethanolic fermentation during anoxia. This chain is Pyruvate decarboxylase 1 (PDC1), found in Arabidopsis thaliana (Mouse-ear cress).